Here is a 169-residue protein sequence, read N- to C-terminus: Cell division inhibitor SulA (169 aa).

The ftsZ binding stretch occupies residues 106 to 112 (ALRTGNY). Residues 162–169 (KIHSNLYH) form a lon protease binding region.

Belongs to the SulA family. As to quaternary structure, interacts with FtsZ. Is rapidly cleaved and degraded by the Lon protease once DNA damage is repaired.

Functionally, component of the SOS system and an inhibitor of cell division. Accumulation of SulA causes rapid cessation of cell division and the appearance of long, non-septate filaments. In the presence of GTP, binds a polymerization-competent form of FtsZ in a 1:1 ratio, thus inhibiting FtsZ polymerization and therefore preventing it from participating in the assembly of the Z ring. This mechanism prevents the premature segregation of damaged DNA to daughter cells during cell division. This Salmonella gallinarum (strain 287/91 / NCTC 13346) protein is Cell division inhibitor SulA.